A 647-amino-acid chain; its full sequence is Sialidase (647 aa).

The N-terminal stretch at 1-37 (MTANPYLRRLPRRRAVSFLLAPALAAATVAGASPAQA) is a signal peptide. Arginine 68 provides a ligand contact to substrate. Aspartate 92 (proton acceptor) is an active-site residue. 3 BNR repeats span residues 102 to 113 (RRSTDGGRTWGE), 175 to 186 (ATSTDGGLTWSH), and 239 to 250 (VYSDDHGRTWRA). Catalysis depends on glutamate 260, which acts as the Nucleophile. Arginine 276 contacts substrate. BNR repeat units lie at residues 287–298 (AVSTDGGHSYGP) and 348–359 (RMSCDDGQTWPV). The active-site Nucleophile is the tyrosine 370. In terms of domain architecture, F5/8 type C spans 496–646 (TFTVTVGLLD…AVAELEVEGQ (151 aa)).

This sequence belongs to the glycosyl hydrolase 33 family.

The protein localises to the secreted. The catalysed reaction is Hydrolysis of alpha-(2-&gt;3)-, alpha-(2-&gt;6)-, alpha-(2-&gt;8)- glycosidic linkages of terminal sialic acid residues in oligosaccharides, glycoproteins, glycolipids, colominic acid and synthetic substrates.. To release sialic acids for use as carbon and energy sources for this non-pathogenic bacterium while in pathogenic microorganisms, sialidases have been suggested to be pathogenic factors. In Micromonospora viridifaciens, this protein is Sialidase (nedA).